The primary structure comprises 122 residues: Small ribosomal subunit protein bS16 (122 aa).

The segment at 81-122 (GLMKRDAKNNPKKGEPGEKAKERAKERAEKAAAGSTEDAAAE) is disordered. The segment covering 83-110 (MKRDAKNNPKKGEPGEKAKERAKERAEK) has biased composition (basic and acidic residues). Low complexity predominate over residues 111 to 122 (AAAGSTEDAAAE).

This sequence belongs to the bacterial ribosomal protein bS16 family.

The protein is Small ribosomal subunit protein bS16 of Xanthobacter autotrophicus (strain ATCC BAA-1158 / Py2).